A 189-amino-acid polypeptide reads, in one-letter code: ATP-dependent protease subunit HslV (189 aa).

Residue Thr-12 is part of the active site. Na(+) contacts are provided by Ser-172, Cys-175, and Thr-178.

The protein belongs to the peptidase T1B family. HslV subfamily. In terms of assembly, a double ring-shaped homohexamer of HslV is capped on each side by a ring-shaped HslU homohexamer. The assembly of the HslU/HslV complex is dependent on binding of ATP.

The protein localises to the cytoplasm. The enzyme catalyses ATP-dependent cleavage of peptide bonds with broad specificity.. Allosterically activated by HslU binding. Protease subunit of a proteasome-like degradation complex believed to be a general protein degrading machinery. The polypeptide is ATP-dependent protease subunit HslV (Ehrlichia chaffeensis (strain ATCC CRL-10679 / Arkansas)).